Here is a 475-residue protein sequence, read N- to C-terminus: Ribosomal RNA small subunit methyltransferase F (475 aa).

Residues 125–131 (AAAPGSK), glutamate 149, aspartate 176, and aspartate 194 contribute to the S-adenosyl-L-methionine site. Residue cysteine 247 is the Nucleophile of the active site.

The protein belongs to the class I-like SAM-binding methyltransferase superfamily. RsmB/NOP family.

The protein localises to the cytoplasm. It catalyses the reaction cytidine(1407) in 16S rRNA + S-adenosyl-L-methionine = 5-methylcytidine(1407) in 16S rRNA + S-adenosyl-L-homocysteine + H(+). Its function is as follows. Specifically methylates the cytosine at position 1407 (m5C1407) of 16S rRNA. In Aeromonas hydrophila subsp. hydrophila (strain ATCC 7966 / DSM 30187 / BCRC 13018 / CCUG 14551 / JCM 1027 / KCTC 2358 / NCIMB 9240 / NCTC 8049), this protein is Ribosomal RNA small subunit methyltransferase F.